A 463-amino-acid polypeptide reads, in one-letter code: MAKNTKLWGGRFEGTVEDWVERFGASISFDQKLAKFDVIGSLAHVQMLGQTGILSLEESEKIQVGLKELLEELEAGQLDFDIANEDIHMNMEVLLTEKIGPLAGKLHTARSRNDQVATDMHLYLKEQLGYVLDKLAHLKGVLLDLAENHVATIMPGYTHLQHAQPISFAYHLMAYYNMFQRDSERFEFNQKHTDLCPLGAAALAGTTFPIDRQLSSDLLEFKQPYTNSLDAVSDRDFILEFLSNASILMMHMSRFCEEMINWCSFEYQFITLSDTFTTGSSIMPQKKNPDMAELIRGKTGRVYGHLFGLLTVMKSLPLAYNKDLQEDKEGMFDTVETILNSLDVLAGMLSSLQVNKEKMQESTEKDFSNATELADYLAGKGLPFREAHEVVGRLVLDSIKSAKNLQDWTLEELQTYHSLITEDIYVYLQPKTAVQRRNSLGGTGFDQVEYQIAVAKKANEAKK.

It belongs to the lyase 1 family. Argininosuccinate lyase subfamily.

It is found in the cytoplasm. The enzyme catalyses 2-(N(omega)-L-arginino)succinate = fumarate + L-arginine. It participates in amino-acid biosynthesis; L-arginine biosynthesis; L-arginine from L-ornithine and carbamoyl phosphate: step 3/3. This Streptococcus pneumoniae (strain JJA) protein is Argininosuccinate lyase.